The sequence spans 194 residues: Fibroblast growth factor 4 (194 aa).

An N-terminal signal peptide occupies residues 1–23 (MLSAAALLPALLLGLLWPGAVRG).

The protein belongs to the heparin-binding growth factors family. As to quaternary structure, reciprocal interactions may create a positive feedback loop between sonic hedgehog (SHH) and FGF4. Posterior ridge.

Its subcellular location is the secreted. Its function is as follows. Plays an important role in the regulation of embryonic development, cell proliferation, and cell differentiation. Required for normal limb development during embryogenesis. This chain is Fibroblast growth factor 4 (FGF4), found in Gallus gallus (Chicken).